Consider the following 419-residue polypeptide: Ribosome biogenesis protein WDR12 homolog (419 aa).

The tract at residues 10-91 (VQVHLKTKQE…EDSIEIEYVE (82 aa)) is ubiquitin-like (UBL) domain. WD repeat units lie at residues 103–140 (LHDD…KLTI), 142–184 (GHTA…NAVE), 191–230 (GHER…AGES), 249–287 (GHRE…IKTE), 289–328 (STNK…GSVV), 334–374 (GHNA…APLY), and 378–416 (GHGE…VENM).

This sequence belongs to the WD repeat WDR12/YTM1 family.

It is found in the nucleus. Its subcellular location is the nucleolus. It localises to the nucleoplasm. In terms of biological role, required for maturation of ribosomal RNAs and formation of the large ribosomal subunit. The protein is Ribosome biogenesis protein WDR12 homolog of Drosophila mojavensis (Fruit fly).